The following is a 288-amino-acid chain: Acetyl-coenzyme A carboxylase carboxyl transferase subunit beta (288 aa).

Positions 34 to 288 (LFAKCPACKH…HLVAFHGGGQ (255 aa)) constitute a CoA carboxyltransferase N-terminal domain. Positions 38, 41, 56, and 59 each coordinate Zn(2+). Residues 38–59 (CPACKHMIYKKDLGLAKICPTC) form a C4-type zinc finger.

It belongs to the AccD/PCCB family. In terms of assembly, acetyl-CoA carboxylase is a heterohexamer composed of biotin carboxyl carrier protein (AccB), biotin carboxylase (AccC) and two subunits each of ACCase subunit alpha (AccA) and ACCase subunit beta (AccD). Zn(2+) is required as a cofactor.

The protein localises to the cytoplasm. The catalysed reaction is N(6)-carboxybiotinyl-L-lysyl-[protein] + acetyl-CoA = N(6)-biotinyl-L-lysyl-[protein] + malonyl-CoA. It participates in lipid metabolism; malonyl-CoA biosynthesis; malonyl-CoA from acetyl-CoA: step 1/1. In terms of biological role, component of the acetyl coenzyme A carboxylase (ACC) complex. Biotin carboxylase (BC) catalyzes the carboxylation of biotin on its carrier protein (BCCP) and then the CO(2) group is transferred by the transcarboxylase to acetyl-CoA to form malonyl-CoA. This Streptococcus pyogenes serotype M6 (strain ATCC BAA-946 / MGAS10394) protein is Acetyl-coenzyme A carboxylase carboxyl transferase subunit beta.